Consider the following 97-residue polypeptide: Serine protease inhibitor Kazal-type 14 (97 aa).

A signal peptide spans 1-21 (MAKSFPVFSLLSFILIHLVLS). The 64-residue stretch at 34-97 (GIIKVKCPYE…RIRFYHDGKC (64 aa)) folds into the Kazal-like domain. Intrachain disulfides connect C40-C79, C57-C76, and C65-C97. An N-linked (GlcNAc...) asparagine glycan is attached at N51.

The protein localises to the secreted. May be a serine protease inhibitor. This chain is Serine protease inhibitor Kazal-type 14 (SPINK14), found in Homo sapiens (Human).